Consider the following 528-residue polypeptide: Membrane protein insertase YidC (528 aa).

4 helical membrane-spanning segments follow: residues 5 to 25 (VVIA…IFPP), 346 to 366 (YGIA…PLTH), 416 to 436 (LPMI…MFSI), and 486 to 506 (MLAL…GLVL).

Belongs to the OXA1/ALB3/YidC family. Type 1 subfamily. Interacts with the Sec translocase complex via SecD. Specifically interacts with transmembrane segments of nascent integral membrane proteins during membrane integration.

Its subcellular location is the cell inner membrane. Functionally, required for the insertion and/or proper folding and/or complex formation of integral membrane proteins into the membrane. Involved in integration of membrane proteins that insert both dependently and independently of the Sec translocase complex, as well as at least some lipoproteins. Aids folding of multispanning membrane proteins. This is Membrane protein insertase YidC from Geotalea uraniireducens (strain Rf4) (Geobacter uraniireducens).